A 404-amino-acid polypeptide reads, in one-letter code: Proteasomal ubiquitin receptor ADRM1-A (404 aa).

The Pru domain maps to 17-130 (SSSKYLVEFR…RKLNEYLNNP (114 aa)). Low complexity predominate over residues 195-247 (GSGGPTTSSSSSSSRSQSAAVTPSSTTSSTRTTSAPVAPAAAPATTPSPAVSS). Disordered stretches follow at residues 195-258 (GSGG…TSPT) and 376-404 (FAKA…MSLD). Residues 248 to 258 (NDGASEATSPT) are compositionally biased toward polar residues. Residues 278–390 (TGEGGQQVDL…QSTSSQKERE (113 aa)) form the DEUBAD domain. The segment covering 386–395 (QKERESSEKK) has biased composition (basic and acidic residues).

Belongs to the ADRM1 family. Component of the 19S proteasome regulatory particle complex. The 26S proteasome consists of a 20S core particle (CP) and two 19S regulatory subunits (RP).

It is found in the cytoplasm. The protein localises to the nucleus. Its function is as follows. Component of the 26S proteasome, a multiprotein complex involved in the ATP-dependent degradation of ubiquitinated proteins. This complex plays a key role in the maintenance of protein homeostasis by removing misfolded or damaged proteins, which could impair cellular functions, and by removing proteins whose functions are no longer required. Therefore, the proteasome participates in numerous cellular processes, including cell cycle progression, apoptosis, or DNA damage repair. Within the complex, functions as a proteasomal ubiquitin receptor. This Xenopus laevis (African clawed frog) protein is Proteasomal ubiquitin receptor ADRM1-A (adrm1-a).